The following is a 735-amino-acid chain: E3 UFM1-protein ligase 1 homolog (735 aa).

The segment at 389–445 is disordered; sequence RLEAEKKKQGGAKAAVKVQEETDDWGDGKKGGKGGKKNAKSVKGGSKSSAPSTSSNL. A compositionally biased stretch (basic residues) spans 419 to 428; it reads GGKGGKKNAK. Residues 429–445 are compositionally biased toward low complexity; the sequence is SVKGGSKSSAPSTSSNL.

The protein belongs to the UFL1 family.

In terms of biological role, E3 UFM1-protein ligase that mediates ufmylation of target proteins. The chain is E3 UFM1-protein ligase 1 homolog (ufl-1) from Caenorhabditis elegans.